Consider the following 63-residue polypeptide: Large ribosomal subunit protein uL29 (63 aa).

The protein belongs to the universal ribosomal protein uL29 family.

The polypeptide is Large ribosomal subunit protein uL29 (Bdellovibrio bacteriovorus (strain ATCC 15356 / DSM 50701 / NCIMB 9529 / HD100)).